The following is a 298-amino-acid chain: Mimecan (298 aa).

The first 19 residues, 1 to 19 (METVHSTFLLLLFVPLTQQ), serve as a signal peptide directing secretion. Asparagine 88 carries an N-linked (GlcNAc...) (keratan sulfate) asparagine glycan. LRR repeat units follow at residues 112–131 (DAVP…FNKI), 132–155 (KKLT…GNLI), 156–179 (EDIE…ENQL), 180–199 (LRLP…HNKI), 200–225 (KSKG…HNDL), 226–246 (ESVP…FNSI), and 247–277 (SSLT…GNPI). A disulfide bond links cysteine 255 and cysteine 288. Asparagine 258 is a glycosylation site (N-linked (GlcNAc...) (keratan sulfate) asparagine).

The protein belongs to the small leucine-rich proteoglycan (SLRP) family. SLRP class III subfamily. In terms of processing, contains keratan sulfate.

The protein localises to the secreted. Its subcellular location is the extracellular space. It localises to the extracellular matrix. Functionally, induces bone formation in conjunction with TGF-beta-1 or TGF-beta-2. In Mus musculus (Mouse), this protein is Mimecan (Ogn).